Reading from the N-terminus, the 179-residue chain is Large ribosomal subunit protein uL5 (179 aa).

This sequence belongs to the universal ribosomal protein uL5 family. Part of the 50S ribosomal subunit; part of the 5S rRNA/L5/L18/L25 subcomplex. Contacts the 5S rRNA and the P site tRNA. Forms a bridge to the 30S subunit in the 70S ribosome.

In terms of biological role, this is one of the proteins that bind and probably mediate the attachment of the 5S RNA into the large ribosomal subunit, where it forms part of the central protuberance. In the 70S ribosome it contacts protein S13 of the 30S subunit (bridge B1b), connecting the 2 subunits; this bridge is implicated in subunit movement. Contacts the P site tRNA; the 5S rRNA and some of its associated proteins might help stabilize positioning of ribosome-bound tRNAs. The protein is Large ribosomal subunit protein uL5 of Saccharophagus degradans (strain 2-40 / ATCC 43961 / DSM 17024).